A 466-amino-acid chain; its full sequence is MALLTAAARLLGTKNASCLVLAARHASASSTNLKDILADLIPKEQARIKTFRQQHGKTVVGQITVDMMYGGMRGMKGLVYETSVLDPDEGIRFRGFSIPECQKLLPKAKGGEEPLPEGLFWLLVTGHIPTEEQVSWLSKEWAKRAALPSHVVTMLDNFPTNLHPMSQLSAAVTALNSESNFARAYAQGISRTKYWELIYEDSMDLIAKLPCVAAKIYRNLYREGSGIGAIDSNLDWSHNFTNMLGYTDHQFTELTRLYLTIHSDHEGGNVSAHTSHLVGSALSDPYLSFAAAMNGLAGPLHGLANQEVLVWLTQLQKEVGKDVSDEKLRDYIWNTLNSGRVVPGYGHAVLRKTDPRYTCQREFALKHLPNDPMFKLVAQLYKIVPNVLLEQGKAKNPWPNVDAHSGVLLQYYGMTEMNYYTVLFGVSRALGVLAQLIWSRALGFPLERPKSMSTEGLMKFVDSKSG.

A mitochondrion-targeting transit peptide spans 1–27 (MALLTAAARLLGTKNASCLVLAARHAS). The SIFI-degron motif lies at 2–21 (ALLTAAARLLGTKNASCLVL). Lys-57 carries the post-translational modification N6-succinyllysine. Residue Lys-76 is modified to N6-acetyllysine; alternate. At Lys-76 the chain carries N6-succinyllysine; alternate. An N6-succinyllysine mark is found at Lys-103 and Lys-193. His-301 is an active-site residue. Residues Lys-321 and Lys-327 each carry the N6-acetyllysine; alternate modification. Lys-321 and Lys-327 each carry N6-succinyllysine; alternate. Residue His-347 is part of the active site. Arg-356 is an oxaloacetate binding site. N6-acetyllysine; alternate is present on Lys-375. The residue at position 375 (Lys-375) is an N6-succinyllysine; alternate. Lys-382 carries the N6-acetyllysine modification. Lys-393 carries the post-translational modification N6-acetyllysine; alternate. At Lys-393 the chain carries N6-succinyllysine; alternate. The residue at position 395 (Lys-395) is an N6,N6,N6-trimethyllysine. Asp-402 is an active-site residue. Arg-428 and Arg-448 together coordinate oxaloacetate. Lys-450 is subject to N6-succinyllysine. At Lys-459 the chain carries N6-acetyllysine; alternate. Lys-459 bears the N6-succinyllysine; alternate mark.

It belongs to the citrate synthase family. In terms of assembly, homodimer. Methylated. Trimethylation at Lys-395 by CSKMT decreases citrate synthase activity. Post-translationally, in response to mitochondrial stress, the precursor protein is ubiquitinated by the SIFI complex in the cytoplasm before mitochondrial import, leading to its degradation. Within the SIFI complex, UBR4 initiates ubiquitin chain that are further elongated or branched by KCMF1.

It localises to the mitochondrion matrix. The enzyme catalyses oxaloacetate + acetyl-CoA + H2O = citrate + CoA + H(+). It functions in the pathway carbohydrate metabolism; tricarboxylic acid cycle; isocitrate from oxaloacetate: step 1/2. Its function is as follows. Key enzyme of the Krebs tricarboxylic acid cycle which catalyzes the synthesis of citrate from acetyl coenzyme A and oxaloacetate. This chain is Citrate synthase, mitochondrial (CS), found in Homo sapiens (Human).